The primary structure comprises 403 residues: Putative F-box protein At5g41500 (403 aa).

An F-box domain is found at 2-47; sequence ATTISNLPRELIEEILSRVPLRAMKAMRLTCKSWNNLSKSESFMKM.

In Arabidopsis thaliana (Mouse-ear cress), this protein is Putative F-box protein At5g41500.